A 258-amino-acid polypeptide reads, in one-letter code: Acyl-[acyl-carrier-protein]--UDP-N-acetylglucosamine O-acyltransferase (258 aa).

This sequence belongs to the transferase hexapeptide repeat family. LpxA subfamily. In terms of assembly, homotrimer.

The protein localises to the cytoplasm. The catalysed reaction is a (3R)-hydroxyacyl-[ACP] + UDP-N-acetyl-alpha-D-glucosamine = a UDP-3-O-[(3R)-3-hydroxyacyl]-N-acetyl-alpha-D-glucosamine + holo-[ACP]. The protein operates within glycolipid biosynthesis; lipid IV(A) biosynthesis; lipid IV(A) from (3R)-3-hydroxytetradecanoyl-[acyl-carrier-protein] and UDP-N-acetyl-alpha-D-glucosamine: step 1/6. Involved in the biosynthesis of lipid A, a phosphorylated glycolipid that anchors the lipopolysaccharide to the outer membrane of the cell. In Azotobacter vinelandii (strain DJ / ATCC BAA-1303), this protein is Acyl-[acyl-carrier-protein]--UDP-N-acetylglucosamine O-acyltransferase.